Reading from the N-terminus, the 133-residue chain is IgW chain C region, secreted form 2 (133 aa).

The Ig-like domain occupies V1–S71. N-linked (GlcNAc...) asparagine glycans are attached at residues N32 and N112. A secretory tail region spans residues K76–K133.

As to expression, expressed mainly in lymphoid tissues including spleen, epigonal organ and circulating lymphocytes.

The protein resides in the secreted. The protein is IgW chain C region, secreted form 2 of Heterodontus francisci (Horn shark).